We begin with the raw amino-acid sequence, 132 residues long: Protein NrdI (132 aa).

Belongs to the NrdI family.

Its function is as follows. Probably involved in ribonucleotide reductase function. The protein is Protein NrdI of Bartonella quintana (strain Toulouse) (Rochalimaea quintana).